Reading from the N-terminus, the 98-residue chain is NADH-ubiquinone oxidoreductase chain 4L (98 aa).

The next 3 membrane-spanning stretches (helical) occupy residues 2–22 (PPIF…TLIF), 29–49 (SLLC…LIIL), and 61–81 (ILLL…LVMV).

This sequence belongs to the complex I subunit 4L family. As to quaternary structure, core subunit of respiratory chain NADH dehydrogenase (Complex I) which is composed of 45 different subunits.

It localises to the mitochondrion inner membrane. The enzyme catalyses a ubiquinone + NADH + 5 H(+)(in) = a ubiquinol + NAD(+) + 4 H(+)(out). In terms of biological role, core subunit of the mitochondrial membrane respiratory chain NADH dehydrogenase (Complex I) which catalyzes electron transfer from NADH through the respiratory chain, using ubiquinone as an electron acceptor. Part of the enzyme membrane arm which is embedded in the lipid bilayer and involved in proton translocation. The sequence is that of NADH-ubiquinone oxidoreductase chain 4L (MT-ND4L) from Avahi unicolor (Sambirano woolly lemur).